Reading from the N-terminus, the 303-residue chain is MDSPYLEIEVPLSSPIHAFDFPQWHVPLKAGACAPRMTEHGEEIPGLMDGCLDLSITKHTVMMWLAALLLMATLFIWGNRDKTKLVPRGAGANILEMLVLFVRDELAIKNIGKEEGPRYVPFLLTVFFFILFMNMLGMVPWMATATGNLAVTMALALCTFVITQVAGIRAAGLGGYLKHLTGGVAPWLWPIMVPVEVLGLFTKPFALTMRLFANMLAGHIVYFFLLGLIFLLGHPAVAAVSVPFAFAIFLLELFVAFVQAYVFAMLSALFIGMSVAMGHHHDDHGHDHPEAGPSHDQGKAHHA.

Helical transmembrane passes span 59–79, 122–142, 148–168, 181–201, 220–240, and 244–264; these read HTVMMWLAALLLMATLFIWGN, FLLTVFFFILFMNMLGMVPWM, NLAVTMALALCTFVITQVAGI, TGGVAPWLWPIMVPVEVLGLF, IVYFFLLGLIFLLGHPAVAAV, and FAFAIFLLELFVAFVQAYVFA. The segment covering 281–290 has biased composition (basic and acidic residues); sequence HDDHGHDHPE. Positions 281 to 303 are disordered; that stretch reads HDDHGHDHPEAGPSHDQGKAHHA.

It belongs to the ATPase A chain family. In terms of assembly, F-type ATPases have 2 components, CF(1) - the catalytic core - and CF(0) - the membrane proton channel. CF(1) has five subunits: alpha(3), beta(3), gamma(1), delta(1), epsilon(1). CF(0) has three main subunits: a(1), b(2) and c(9-12). The alpha and beta chains form an alternating ring which encloses part of the gamma chain. CF(1) is attached to CF(0) by a central stalk formed by the gamma and epsilon chains, while a peripheral stalk is formed by the delta and b chains.

It localises to the cell inner membrane. Its function is as follows. Key component of the proton channel; it plays a direct role in the translocation of protons across the membrane. The sequence is that of ATP synthase subunit a from Myxococcus xanthus (strain DK1622).